A 171-amino-acid polypeptide reads, in one-letter code: Peptidyl-prolyl cis-trans isomerase 7 (171 aa).

The PPIase cyclophilin-type domain maps to 7-170 (FFDITIAGKP…SECLIADCGQ (164 aa)).

It belongs to the cyclophilin-type PPIase family.

It carries out the reaction [protein]-peptidylproline (omega=180) = [protein]-peptidylproline (omega=0). In terms of biological role, PPIases accelerate the folding of proteins. It catalyzes the cis-trans isomerization of proline imidic peptide bonds in oligopeptides. In Caenorhabditis elegans, this protein is Peptidyl-prolyl cis-trans isomerase 7 (cyn-7).